A 488-amino-acid polypeptide reads, in one-letter code: uncharacterized protein (488 aa).

It belongs to the IIV-6 467R family.

This is an uncharacterized protein from Invertebrate iridescent virus 3 (IIV-3).